The chain runs to 602 residues: mRNA-capping enzyme subunit beta (602 aa).

The interval 1–249 is disordered; the sequence is MSEHHSKRAL…NESNSEETHD (249 aa). Over residues 15–42 the composition is skewed to basic and acidic residues; that stretch reads LVNHDENDKSKLQKLADNESSVRSDDNR. Positions 48-64 are enriched in low complexity; that stretch reads NIVNGNNSNSDLNSNGV. A compositionally biased stretch (acidic residues) spans 65 to 76; the sequence is IEEDTDTDDDVG. Positions 88-110 are enriched in basic and acidic residues; that stretch reads DYDKQDRFSPEKKRIQARKKDTS. The segment covering 114–128 has biased composition (low complexity); the sequence is PSISNESPSNSKESS. Residues 141–169 are compositionally biased toward basic and acidic residues; that stretch reads TDRKDSSEEKPDLTGPELVKEPDTNEYKR. Residues 171-181 are compositionally biased toward polar residues; the sequence is SIQSITNAEDT. Composition is skewed to basic and acidic residues over residues 213 to 222 and 231 to 249; these read TEEHKPKTET and QENKQKDNVNESNSEETHD. Lys276 (N6-GMP-lysine intermediate) is an active-site residue.

The protein belongs to the fungal TPase family. In terms of assembly, heterodimer. The mRNA-capping enzyme is composed of two separate chains alpha and beta, respectively a mRNA guanylyltransferase and an mRNA 5'-triphosphate monophosphatase. Mg(2+) is required as a cofactor.

Its subcellular location is the nucleus. It catalyses the reaction a 5'-end triphospho-ribonucleoside in mRNA + H2O = a 5'-end diphospho-ribonucleoside in mRNA + phosphate + H(+). Its function is as follows. First step of mRNA capping. Converts the 5'-triphosphate end of a nascent mRNA chain into a diphosphate end. This chain is mRNA-capping enzyme subunit beta (CET1), found in Candida glabrata (strain ATCC 2001 / BCRC 20586 / JCM 3761 / NBRC 0622 / NRRL Y-65 / CBS 138) (Yeast).